The chain runs to 348 residues: D-erythrose-4-phosphate dehydrogenase (348 aa).

Residues 12 to 13 (RI) and R81 each bind NAD(+). Residues 154–156 (SCT), R200, 213–214 (TK), and R236 contribute to the substrate site. The active-site Nucleophile is the C155. N318 lines the NAD(+) pocket.

This sequence belongs to the glyceraldehyde-3-phosphate dehydrogenase family. Epd subfamily. In terms of assembly, homotetramer.

The protein localises to the cytoplasm. The catalysed reaction is D-erythrose 4-phosphate + NAD(+) + H2O = 4-phospho-D-erythronate + NADH + 2 H(+). The protein operates within cofactor biosynthesis; pyridoxine 5'-phosphate biosynthesis; pyridoxine 5'-phosphate from D-erythrose 4-phosphate: step 1/5. Catalyzes the NAD-dependent conversion of D-erythrose 4-phosphate to 4-phosphoerythronate. The chain is D-erythrose-4-phosphate dehydrogenase from Salmonella agona (strain SL483).